The following is a 115-amino-acid chain: Large ribosomal subunit protein bL20 (115 aa).

The protein belongs to the bacterial ribosomal protein bL20 family.

Its function is as follows. Binds directly to 23S ribosomal RNA and is necessary for the in vitro assembly process of the 50S ribosomal subunit. It is not involved in the protein synthesizing functions of that subunit. The polypeptide is Large ribosomal subunit protein bL20 (Prochlorococcus marinus (strain MIT 9303)).